A 441-amino-acid chain; its full sequence is Transcription factor TOXE (441 aa).

The basic DNA-binding region stretch occupies residues 14 to 40; sequence TDINERRKLQNRVAQRKYRTRQKTRMK. The segment at 209–243 is disordered; it reads FEPNDQRKTENLPREPCGSCPSSSHGYSPTSGNPS. The segment covering 212 to 221 has biased composition (basic and acidic residues); sequence NDQRKTENLP. Over residues 228-241 the composition is skewed to polar residues; the sequence is CPSSSHGYSPTSGN. 4 ANK repeats span residues 289-318, 322-351, 355-384, and 413-440; these read DQFS…PLDI, SGKT…EMLA, EGNS…SCRE, and EGMT…SANV.

This sequence belongs to the bZIP family. As to quaternary structure, monomer.

Its subcellular location is the nucleus. In terms of biological role, transcription factor, part of the diffuse TOX2 gene cluster that mediates the biosynthesis of the HC-toxin, cyclic tetrapeptide of structure cyclo(D-Pro-L-Ala-D-Ala-L-Aeo), where Aeo stands for 2-amino-9,10-epoxi-8-oxodecanoic acid. HC-toxin is a determinant of specificity and virulence in the interaction between the producing fungus and its host, maize. TOXE is a pathway-specific transcription factor which coordinates the expression of genes involved in HC-toxin biosynthesis. Binds to the tox-box, a 10-bp motif with the consensus 5'-ATCTCNCGNA-3', which is found in the promoter of all genes involved in HC-toxin biosynthesis. Required for pathogenicity of the fungus on maize. The sequence is that of Transcription factor TOXE from Cochliobolus carbonum (Maize leaf spot fungus).